We begin with the raw amino-acid sequence, 218 residues long: Superoxide dismutase [Mn] 1 (218 aa).

4 residues coordinate Mn(2+): His-43, His-98, Asp-180, and His-184.

This sequence belongs to the iron/manganese superoxide dismutase family. In terms of assembly, homodimer. The cofactor is Mn(2+).

It catalyses the reaction 2 superoxide + 2 H(+) = H2O2 + O2. In terms of biological role, destroys superoxide anion radicals which are normally produced within the cells and which are toxic to biological systems. This Bacillus cereus (strain ATCC 14579 / DSM 31 / CCUG 7414 / JCM 2152 / NBRC 15305 / NCIMB 9373 / NCTC 2599 / NRRL B-3711) protein is Superoxide dismutase [Mn] 1 (sodA1).